Reading from the N-terminus, the 322-residue chain is Homoserine kinase (322 aa).

106 to 116 (ALSSGMGGSAA) is an ATP binding site.

Belongs to the GHMP kinase family. Homoserine kinase subfamily.

Its subcellular location is the cytoplasm. It catalyses the reaction L-homoserine + ATP = O-phospho-L-homoserine + ADP + H(+). It participates in amino-acid biosynthesis; L-threonine biosynthesis; L-threonine from L-aspartate: step 4/5. In terms of biological role, catalyzes the ATP-dependent phosphorylation of L-homoserine to L-homoserine phosphate. The protein is Homoserine kinase of Xanthomonas campestris pv. campestris (strain B100).